A 357-amino-acid chain; its full sequence is Elongation factor Ts (357 aa).

Residues 82-85 form an involved in Mg(2+) ion dislocation from EF-Tu region; sequence TDFV.

Belongs to the EF-Ts family.

It localises to the cytoplasm. Its function is as follows. Associates with the EF-Tu.GDP complex and induces the exchange of GDP to GTP. It remains bound to the aminoacyl-tRNA.EF-Tu.GTP complex up to the GTP hydrolysis stage on the ribosome. In Campylobacter jejuni subsp. doylei (strain ATCC BAA-1458 / RM4099 / 269.97), this protein is Elongation factor Ts.